Reading from the N-terminus, the 53-residue chain is ATP synthase protein 8 (53 aa).

The chain crosses the membrane as a helical span at residues 6–26; it reads PIGWLSLFIIFSLTFILFSMM.

This sequence belongs to the ATPase protein 8 family. F-type ATPases have 2 components, CF(1) - the catalytic core - and CF(0) - the membrane proton channel.

It localises to the mitochondrion membrane. Functionally, mitochondrial membrane ATP synthase (F(1)F(0) ATP synthase or Complex V) produces ATP from ADP in the presence of a proton gradient across the membrane which is generated by electron transport complexes of the respiratory chain. F-type ATPases consist of two structural domains, F(1) - containing the extramembraneous catalytic core and F(0) - containing the membrane proton channel, linked together by a central stalk and a peripheral stalk. During catalysis, ATP synthesis in the catalytic domain of F(1) is coupled via a rotary mechanism of the central stalk subunits to proton translocation. Part of the complex F(0) domain. Minor subunit located with subunit a in the membrane. The polypeptide is ATP synthase protein 8 (mt:ATPase8) (Ceratitis capitata (Mediterranean fruit fly)).